A 529-amino-acid polypeptide reads, in one-letter code: ATP synthase F(1) complex catalytic subunit beta, mitochondrial (529 aa).

The transit peptide at 1–46 (MLSLVGRVASASASGALRGLNPLAALPQAHLLLRTAPAGVHPARDY) directs the protein to the mitochondrion. The O-linked (GlcNAc) serine glycan is linked to Ser106. Lys124, Lys133, and Lys161 each carry N6-acetyllysine; alternate. N6-succinyllysine; alternate occurs at positions 124, 133, and 161. Lys198 is subject to N6-acetyllysine. ADP contacts are provided by Gly209, Val210, Gly211, Lys212, Thr213, and Val214. Residue Gly209 participates in ATP binding. 5 residues coordinate phosphate: Gly209, Val210, Gly211, Lys212, and Thr213. Residues Gly211, Lys212, Thr213, and Val214 each coordinate ATP. Thr213 provides a ligand contact to Mg(2+). Glu238 lines the Mg(2+) pocket. Residue Arg239 coordinates ATP. N6-acetyllysine; alternate occurs at positions 259 and 264. Residues Lys259 and Lys264 each carry the N6-succinyllysine; alternate modification. Position 312 is a phosphothreonine (Thr312). Ser415 carries the post-translational modification Phosphoserine. Lys426 carries the N6-acetyllysine modification. Phosphoserine is present on Ser433. N6-acetyllysine is present on residues Lys480 and Lys485. The residue at position 522 (Lys522) is an N6-acetyllysine; alternate. Lys522 is modified (N6-succinyllysine; alternate). Phosphoserine is present on Ser529.

The protein belongs to the ATPase alpha/beta chains family. As to quaternary structure, homotrimer. Component of the ATP synthase complex composed at least of ATP5F1A/subunit alpha, ATP5F1B/subunit beta, ATP5MC1/subunit c (homooctomer), MT-ATP6/subunit a, MT-ATP8/subunit 8, ATP5ME/subunit e, ATP5MF/subunit f, ATP5MG/subunit g, ATP5MK/subunit k, ATP5MJ/subunit j, ATP5F1C/subunit gamma, ATP5F1D/subunit delta, ATP5F1E/subunit epsilon, ATP5PF/subunit F6, ATP5PB/subunit b, ATP5PD/subunit d, ATP5PO/subunit OSCP. ATP synthase complex consists of a soluble F(1) head domain (subunits alpha(3) and beta(3)) - the catalytic core - and a membrane F(0) domain - the membrane proton channel (subunits c, a, 8, e, f, g, k and j). These two domains are linked by a central stalk (subunits gamma, delta, and epsilon) rotating inside the F1 region and a stationary peripheral stalk (subunits F6, b, d, and OSCP). Interacts with PPIF. Interacts with BCL2L1 isoform BCL-X(L); the interaction mediates the association of BCL2L1 isoform BCL-X(L) with the mitochondrial membrane F(1)F(0) ATP synthase and enhances neurons metabolic efficiency. Interacts with CLN5 and PPT1. Interacts with S100A1; this interaction increases F1-ATPase activity. Interacts with MTLN. Interacts with TTC5/STRAP; the interaction results in decreased mitochondrial ATP production.

It localises to the mitochondrion inner membrane. The catalysed reaction is ATP + H2O + 4 H(+)(in) = ADP + phosphate + 5 H(+)(out). In terms of biological role, catalytic subunit beta, of the soluble F(1) head domain within the mitochondrial ATP synthase complex (F(1)F(0) ATP synthase or complex V) that produces ATP from ADP and phosphate inorganique in the presence of a proton gradient across the membrane which is generated by electron transport complexes of the respiratory chain. With the non-catalytic subunit alpha (ATP5F1A), forms the catalytic core in the F(1) domain. ATP synthase complex consist of two structural domains, F(1) - containing the extramembraneous catalytic core, and F(0) - containing the membrane proton channel, linked together by a central stalk and a peripheral stalk. During catalysis, ATP synthesis in the catalytic domain of F(1) is coupled via a rotary mechanism of the central stalk subunits to proton translocation. Its function is as follows. Catalytic subunit beta, of the mitochondrial membrane ATP synthase complex (F(1)F(0) ATP synthase or Complex V) that produces ATP from ADP in the presence of a proton gradient across the membrane which is generated by electron transport complexes of the respiratory chain. ATP synthase complex consist of a soluble F(1) head domain - the catalytic core - and a membrane F(1) domain - the membrane proton channel. These two domains are linked by a central stalk rotating inside the F(1) region and a stationary peripheral stalk. During catalysis, ATP synthesis in the catalytic domain of F(1) is coupled via a rotary mechanism of the central stalk subunits to proton translocation. In vivo, can only synthesize ATP although its ATP hydrolase activity can be activated artificially in vitro. With the subunit alpha (ATP5F1A), forms the catalytic core in the F(1) domain. This Rattus norvegicus (Rat) protein is ATP synthase F(1) complex catalytic subunit beta, mitochondrial.